A 115-amino-acid polypeptide reads, in one-letter code: Cytochrome c (115 aa).

Heme c contacts are provided by cysteine 26, cysteine 29, histidine 30, and methionine 91.

It belongs to the cytochrome c family. Binds 1 heme c group covalently per subunit.

The protein localises to the mitochondrion intermembrane space. Its function is as follows. Electron carrier protein. The oxidized form of the cytochrome c heme group can accept an electron from the heme group of the cytochrome c1 subunit of cytochrome reductase. Cytochrome c then transfers this electron to the cytochrome oxidase complex, the final protein carrier in the mitochondrial electron-transport chain. The sequence is that of Cytochrome c from Theileria annulata.